Reading from the N-terminus, the 125-residue chain is Small ribosomal subunit protein eS8 (125 aa).

The disordered stretch occupies residues 1 to 20 (MLWQGESIRKVTGGRRRPAQ).

The protein belongs to the eukaryotic ribosomal protein eS8 family. As to quaternary structure, part of the 30S ribosomal subunit.

This is Small ribosomal subunit protein eS8 from Methanoregula boonei (strain DSM 21154 / JCM 14090 / 6A8).